The sequence spans 160 residues: Serine-protein kinase RsbW (160 aa).

This sequence belongs to the anti-sigma-factor family.

The catalysed reaction is L-seryl-[protein] + ATP = O-phospho-L-seryl-[protein] + ADP + H(+). The enzyme catalyses L-threonyl-[protein] + ATP = O-phospho-L-threonyl-[protein] + ADP + H(+). Functionally, negative regulator of sigma-B activity. Phosphorylates and inactivates its specific antagonist protein, RsbV. Upon phosphorylation of RsbV, RsbW is released and binds to sigma-B, thereby blocking its ability to form an RNA polymerase holoenzyme (E-sigma-B). The polypeptide is Serine-protein kinase RsbW (Bacillus velezensis (strain DSM 23117 / BGSC 10A6 / LMG 26770 / FZB42) (Bacillus amyloliquefaciens subsp. plantarum)).